The sequence spans 112 residues: FK506-binding protein 1A (112 aa).

Positions 20–108 (GDFVTIHYTG…IFEVELLGIN (89 aa)) constitute a PPIase FKBP-type domain.

Belongs to the FKBP-type PPIase family. FKBP1 subfamily.

The protein localises to the cytoplasm. It catalyses the reaction [protein]-peptidylproline (omega=180) = [protein]-peptidylproline (omega=0). Its activity is regulated as follows. Inhibited by both FK506 and rapamycin. PPIases accelerate the folding of proteins. It catalyzes the cis-trans isomerization of proline imidic peptide bonds in oligopeptides. This chain is FK506-binding protein 1A (fpr1A), found in Aspergillus fumigatus (strain ATCC MYA-4609 / CBS 101355 / FGSC A1100 / Af293) (Neosartorya fumigata).